The chain runs to 487 residues: Glutamyl-tRNA(Gln) amidotransferase subunit A (487 aa).

Catalysis depends on charge relay system residues K79 and S154. S178 (acyl-ester intermediate) is an active-site residue.

The protein belongs to the amidase family. GatA subfamily. As to quaternary structure, heterotrimer of A, B and C subunits.

It carries out the reaction L-glutamyl-tRNA(Gln) + L-glutamine + ATP + H2O = L-glutaminyl-tRNA(Gln) + L-glutamate + ADP + phosphate + H(+). Allows the formation of correctly charged Gln-tRNA(Gln) through the transamidation of misacylated Glu-tRNA(Gln) in organisms which lack glutaminyl-tRNA synthetase. The reaction takes place in the presence of glutamine and ATP through an activated gamma-phospho-Glu-tRNA(Gln). The polypeptide is Glutamyl-tRNA(Gln) amidotransferase subunit A (Roseiflexus sp. (strain RS-1)).